The chain runs to 481 residues: 5-hydroxytryptamine receptor 2B (481 aa).

Residues Met-1 to Trp-56 are Extracellular-facing. An N-linked (GlcNAc...) asparagine glycan is attached at Asn-30. The helical transmembrane segment at Ala-57 to Val-79 threads the bilayer. At Ser-80 to Asn-90 the chain is on the cytoplasmic side. A helical membrane pass occupies residues Tyr-91–Leu-113. Residues Thr-114–Pro-129 lie on the Extracellular side of the membrane. The cysteines at positions 128 and 207 are disulfide-linked. Residues Ala-130–Val-151 form a helical membrane-spanning segment. Ergotamine is bound by residues Asp-135 and Thr-140. The short motif at Asp-152–Tyr-154 is the DRY motif; important for ligand-induced conformation changes element. The Cytoplasmic segment spans residues Asp-152–Thr-171. A helical membrane pass occupies residues Ala-172–Ile-192. The Extracellular portion of the chain corresponds to Lys-193 to Asp-216. Leu-209 lines the ergotamine pocket. Residues Glu-212 to Gly-215 carry the [DE]RFG motif; may stabilize a conformation that preferentially activates signaling via beta-arrestin family members motif. Residues Phe-217–Leu-239 form a helical membrane-spanning segment. Residues Thr-240–Lys-324 are Cytoplasmic-facing. The chain crosses the membrane as a helical span at residues Val-325–Ile-345. Topologically, residues Thr-346–Met-360 are extracellular. Cysteines 350 and 353 form a disulfide. Residues Leu-361–Leu-382 traverse the membrane as a helical segment. The NPxxY motif; important for ligand-induced conformation changes and signaling signature appears at Asn-376–Tyr-380. Residues Phe-383–Val-481 are Cytoplasmic-facing. The S-palmitoyl cysteine moiety is linked to residue Cys-397. A PDZ-binding motif is present at residues Ser-479–Val-481.

The protein belongs to the G-protein coupled receptor 1 family. In terms of assembly, interacts (via C-terminus) with MPDZ. In terms of tissue distribution, ubiquitous. Detected in liver, kidney, heart, pulmonary artery, and intestine. Detected at lower levels in blood, placenta and brain, especially in cerebellum, occipital cortex and frontal cortex.

The protein localises to the cell membrane. Its subcellular location is the synapse. It is found in the synaptosome. G-protein coupled receptor for 5-hydroxytryptamine (serotonin). Also functions as a receptor for various ergot alkaloid derivatives and psychoactive substances. Ligand binding causes a conformation change that triggers signaling via guanine nucleotide-binding proteins (G proteins) and modulates the activity of downstream effectors. HTR2B is coupled to G(q)/G(11) G alpha proteins and activates phospholipase C-beta, releasing diacylglycerol (DAG) and inositol 1,4,5-trisphosphate (IP3) second messengers that modulate the activity of phosphatidylinositol 3-kinase and promote the release of Ca(2+) ions from intracellular stores, respectively. Beta-arrestin family members inhibit signaling via G proteins and mediate activation of alternative signaling pathways. Plays a role in the regulation of dopamine and 5-hydroxytryptamine release, 5-hydroxytryptamine uptake and in the regulation of extracellular dopamine and 5-hydroxytryptamine levels, and thereby affects neural activity. May play a role in the perception of pain. Plays a role in the regulation of behavior, including impulsive behavior. Required for normal proliferation of embryonic cardiac myocytes and normal heart development. Protects cardiomyocytes against apoptosis. Plays a role in the adaptation of pulmonary arteries to chronic hypoxia. Plays a role in vasoconstriction. Required for normal osteoblast function and proliferation, and for maintaining normal bone density. Required for normal proliferation of the interstitial cells of Cajal in the intestine. This Homo sapiens (Human) protein is 5-hydroxytryptamine receptor 2B.